The primary structure comprises 700 residues: Elongation factor G (700 aa).

One can recognise a tr-type G domain in the interval 10–286 (TKVRNIGIMA…AVIDYLPNPL (277 aa)). Residues 19–26 (AHIDAGKT), 83–87 (DTPGH), and 137–140 (NKMD) each bind GTP.

Belongs to the TRAFAC class translation factor GTPase superfamily. Classic translation factor GTPase family. EF-G/EF-2 subfamily.

The protein localises to the cytoplasm. Functionally, catalyzes the GTP-dependent ribosomal translocation step during translation elongation. During this step, the ribosome changes from the pre-translocational (PRE) to the post-translocational (POST) state as the newly formed A-site-bound peptidyl-tRNA and P-site-bound deacylated tRNA move to the P and E sites, respectively. Catalyzes the coordinated movement of the two tRNA molecules, the mRNA and conformational changes in the ribosome. This chain is Elongation factor G, found in Mycolicibacterium vanbaalenii (strain DSM 7251 / JCM 13017 / BCRC 16820 / KCTC 9966 / NRRL B-24157 / PYR-1) (Mycobacterium vanbaalenii).